The sequence spans 124 residues: Putative ankyrin repeat protein RF_1087 (124 aa).

3 ANK repeats span residues 17–46 (NDQK…NPNI), 50–79 (NGET…IIDS), and 83–112 (FERT…TIGN).

This chain is Putative ankyrin repeat protein RF_1087, found in Rickettsia felis (strain ATCC VR-1525 / URRWXCal2) (Rickettsia azadi).